Reading from the N-terminus, the 240-residue chain is 1-(5-phosphoribosyl)-5-[(5-phosphoribosylamino)methylideneamino] imidazole-4-carboxamide isomerase (240 aa).

D8 acts as the Proton acceptor in catalysis. D129 serves as the catalytic Proton donor.

This sequence belongs to the HisA/HisF family.

It localises to the cytoplasm. It catalyses the reaction 1-(5-phospho-beta-D-ribosyl)-5-[(5-phospho-beta-D-ribosylamino)methylideneamino]imidazole-4-carboxamide = 5-[(5-phospho-1-deoxy-D-ribulos-1-ylimino)methylamino]-1-(5-phospho-beta-D-ribosyl)imidazole-4-carboxamide. Its pathway is amino-acid biosynthesis; L-histidine biosynthesis; L-histidine from 5-phospho-alpha-D-ribose 1-diphosphate: step 4/9. The chain is 1-(5-phosphoribosyl)-5-[(5-phosphoribosylamino)methylideneamino] imidazole-4-carboxamide isomerase from Oceanobacillus iheyensis (strain DSM 14371 / CIP 107618 / JCM 11309 / KCTC 3954 / HTE831).